A 153-amino-acid chain; its full sequence is TM2 domain-containing protein DDB_G0277895 (153 aa).

In terms of domain architecture, TM2 spans 3 to 50; sequence QKSVCVTYLLWLFFGLFGIHRFYLNRPCSGVLYLFTCGCFFIGWFIDI. 2 consecutive transmembrane segments (helical) span residues 6–26 and 33–53; these read VCVTYLLWLFFGLFGIHRFYL and VLYLFTCGCFFIGWFIDICLI. Residues 85–153 form a disordered region; that stretch reads GSPQQQPYGA…GNYPPPYGPQ (69 aa). Tandem repeats lie at residues 89–96, 97–104, 105–112, 113–120, 121–128, and 129–136. Positions 89 to 136 are 6 X 8 AA tandem repeat of Q-Q-P-Y-G-A-P-P; the sequence is QQPYGAPPQQPYGAPPQQPYGAPPQQPYGAPPQQPYGAPPPQPYGAPP. A compositionally biased stretch (pro residues) spans 93 to 153; the sequence is GAPPQQPYGA…GNYPPPYGPQ (61 aa).

It belongs to the TM2 family.

It localises to the membrane. This Dictyostelium discoideum (Social amoeba) protein is TM2 domain-containing protein DDB_G0277895.